A 411-amino-acid polypeptide reads, in one-letter code: Adenylosuccinate synthetase (411 aa).

GTP is bound by residues 11 to 17 (GDEGKGK) and 39 to 41 (GHT). D12 (proton acceptor) is an active-site residue. 2 residues coordinate Mg(2+): D12 and G39. Residues 12–15 (DEGK), 37–40 (NAGH), T121, R135, Q215, T230, and R294 contribute to the IMP site. The active-site Proton donor is H40. 290–296 (TTTKRPR) provides a ligand contact to substrate. GTP is bound by residues R296, 322–324 (KLD), and 400–402 (STS).

Belongs to the adenylosuccinate synthetase family. As to quaternary structure, homodimer. Requires Mg(2+) as cofactor.

It is found in the cytoplasm. The enzyme catalyses IMP + L-aspartate + GTP = N(6)-(1,2-dicarboxyethyl)-AMP + GDP + phosphate + 2 H(+). It participates in purine metabolism; AMP biosynthesis via de novo pathway; AMP from IMP: step 1/2. In terms of biological role, plays an important role in the de novo pathway of purine nucleotide biosynthesis. Catalyzes the first committed step in the biosynthesis of AMP from IMP. The protein is Adenylosuccinate synthetase of Helicobacter pylori (strain ATCC 700392 / 26695) (Campylobacter pylori).